Reading from the N-terminus, the 419-residue chain is AT-rich binding protein (419 aa).

Residues isoleucine 29–histidine 52 form a C2H2-type 1 zinc finger. Residues leucine 121–glutamate 179 are disordered. 2 stretches are compositionally biased toward low complexity: residues histidine 126–glutamine 149 and glutamine 156–glutamine 173. C2H2-type zinc fingers lie at residues tyrosine 352–histidine 376 and phenylalanine 382–histidine 405.

The protein localises to the nucleus. Functionally, may be a transcription factor for genes having (A+T) stretches in their promoter and/or enhancer regions. Binds to AT rich DNA. The sequence is that of AT-rich binding protein from Drosophila grimshawi (Hawaiian fruit fly).